The chain runs to 395 residues: GPI-anchor transamidase (395 aa).

A signal peptide spans 1 to 27; sequence MVDTCFLSRGLTTLAGLLLLPFGSLAA. Residues 28–368 are Lumenal-facing; it reads SQIEDQAEQF…PKLKDWHPPG (341 aa). Residues Asp79, Ile82, Glu118, and Asp120 each contribute to the Ca(2+) site. His164 (proton donor) is an active-site residue. The active-site Nucleophile; acyl-thioester intermediate is Cys206. Residues Cys206, Ser232, and Ser234 each coordinate a protein. The tract at residues 231-236 is autoinhibitory loop; that stretch reads DSLSHQ. An intrachain disulfide couples Cys275 to Cys280. The helical transmembrane segment at 369 to 385 threads the bilayer; that stretch reads GFILGLWALIIMVFFKT. Over 386–395 the chain is Cytoplasmic; the sequence is YGIKHMKFIF.

Belongs to the peptidase C13 family. As to quaternary structure, heteropentamer. Part of the GPI-anchor transamidase complex, consisting of PIGK, PIGT, PIGS, PIGU and GAA1. Interacts with GPAA1. Interacts with PIGT; this interaction, via a disulfide link, stabilizes the expression of GAA1 and PIGK and links them to PIGS. Post-translationally, the disulfide bond between PIGK/GPI8 and PIGT is important for normal enzyme activity.

The protein resides in the endoplasmic reticulum membrane. Its pathway is glycolipid biosynthesis; glycosylphosphatidylinositol-anchor biosynthesis. With respect to regulation, in the absence of proproteins substrates, exists in an inactive state with a disrupted catalytic site by an autoinhibitory loop. The binding of proprotein substrates, particularly the CSP region, to GPI-T triggers concerted conformational changes that alleviate the inhibition by the autoinhibitory loop. Meanwhile, proprotein residues near the omega- site induce the formation of a catalytic cleft for catalysis, following which the products are released and GPI-T reverts to the inactive state. Catalytic subunit of the glycosylphosphatidylinositol-anchor (GPI-anchor) transamidase (GPI-T) complex that catalyzes the formation of the linkage between a proprotein and a GPI-anchor and participates in GPI anchored protein biosynthesis. Recognizes diverse proproteins at a C-terminal signal peptide (CSP) region that lacks consensus sequence and replaces it with a GPI-anchor via a transamidation reaction. Transamidation catalysis reaction follows a two-phase mechanism. In the acyl-enzyme phase, the carbonyl group of the proproteins's omega-site undergoes a nucleophilic attack forming an enzyme-substrate thioester bond. Followed by a general acid catalysis that allows CSP releasing, regenerating the carbonyl, and forming the acyl-enzyme intermediate. In the GPI-anchor attachment phase, the amino group of the GPI-anchor's ethanolamine phosphate, the one on third mannose (EtNP3), mediates a nucleophilic attack on the carbonyl of the acyl-enzyme intermediate, replacing the CSP, allowing GPI-anchor attachment to the omega-residue, therefore forming the product and freeing the enzyme. The protein is GPI-anchor transamidase of Bos taurus (Bovine).